The following is a 282-amino-acid chain: E3 ubiquitin-protein ligase SIAH1 (282 aa).

The segment covering 1 to 17 has biased composition (polar residues); the sequence is MSRQTATALPTGTSKCP. The disordered stretch occupies residues 1–22; that stretch reads MSRQTATALPTGTSKCPPSQRV. At S19 the chain carries Phosphoserine; by ATM and ATR. An RING-type zinc finger spans residues 41-76; it reads CPVCFDYVLPPILQCQSGHLVCSNCRPKLTCCPTCR. Residues 90 to 282 form an SBD region; it reads VANSVLFPCK…LGINVTISMC (193 aa). Residues 93–153 form an SIAH-type zinc finger; it reads SVLFPCKYAS…VMPHLMHQHK (61 aa). Positions 98, 105, 117, 121, 128, 135, 147, and 152 each coordinate Zn(2+).

It belongs to the SINA (Seven in absentia) family. As to quaternary structure, homodimer. Interacts with group 1 glutamate receptors GRM1 and GRM5. Interacts with DAB1, which may inhibit its activity. Interacts with UBE2E2. Interacts with PEG3. Interacts with GAPDH; leading to stabilize SIAH1. Component of some large E3 complex composed of UBE2D1, SIAH1, CACYBP/SIP, SKP1, APC and TBL1X. Interacts with UBE2I. Interacts with alpha-tubulin. Interacts with PEG10, which may inhibit its activity. Interacts with KHDRBS3. Interacts with SNCAIP. Interacts with HIPK2; the interaction is promoted by DAZAP2 and results in SIAH1-mediated ubiquitination and subsequent proteasomal degradation of HIPK2. Interacts with DAZAP2; the interaction is decreased following phosphorylation of DAZAP2 by HIPK2. Interacts with Bassoon/BSN and Piccolo/PLCO; these interactions negatively regulate SIAH1 E3 ligase activity. Interacts with DCC. Interacts with AXIN1; catalyzes AXIN1 ubiquitination and subsequent proteasome-mediated ubiquitin-dependent degradation. Post-translationally, phosphorylated on Ser-19 by ATM and ATR. This phosphorylation disrupts SIAH1 interaction with HIPK2, and subsequent proteasomal degradation of HIPK2. In terms of tissue distribution, widely expressed at a low level. Down-regulated in advanced hepatocellular carcinomas.

It is found in the cytoplasm. The protein resides in the nucleus. It carries out the reaction S-ubiquitinyl-[E2 ubiquitin-conjugating enzyme]-L-cysteine + [acceptor protein]-L-lysine = [E2 ubiquitin-conjugating enzyme]-L-cysteine + N(6)-ubiquitinyl-[acceptor protein]-L-lysine.. It participates in protein modification; protein ubiquitination. Its activity is regulated as follows. Inhibited by interaction with SNCAIP (isoform 2, but not isoform 1). May be inhibited by interaction with PEG10. E3 ubiquitin-protein ligase that mediates ubiquitination and subsequent proteasomal degradation of target proteins. E3 ubiquitin ligases accept ubiquitin from an E2 ubiquitin-conjugating enzyme in the form of a thioester and then directly transfers the ubiquitin to targeted substrates. Mediates E3 ubiquitin ligase activity either through direct binding to substrates or by functioning as the essential RING domain subunit of larger E3 complexes. Triggers the ubiquitin-mediated degradation of many substrates, including proteins involved in transcription regulation (ELL2, MYB, POU2AF1, PML and RBBP8), a cell surface receptor (DCC), the cell-surface receptor-type tyrosine kinase FLT3, the cytoplasmic signal transduction molecules (KLF10/TIEG1 and NUMB), an antiapoptotic protein (BAG1), a microtubule motor protein (KIF22), a protein involved in synaptic vesicle function in neurons (SYP), a structural protein (CTNNB1) and SNCAIP. Confers constitutive instability to HIPK2 through proteasomal degradation. It is thereby involved in many cellular processes such as apoptosis, tumor suppression, cell cycle, axon guidance, transcription regulation, spermatogenesis and TNF-alpha signaling. Has some overlapping function with SIAH2. Induces apoptosis in cooperation with PEG3. Upon nitric oxid (NO) generation that follows apoptotic stimulation, interacts with S-nitrosylated GAPDH, mediating the translocation of GAPDH to the nucleus. GAPDH acts as a stabilizer of SIAH1, facilitating the degradation of nuclear proteins. Mediates ubiquitination and degradation of EGLN2 and EGLN3 in response to the unfolded protein response (UPR), leading to their degradation and subsequent stabilization of ATF4. Also part of the Wnt signaling pathway in which it mediates the Wnt-induced ubiquitin-mediated proteasomal degradation of AXIN1. The protein is E3 ubiquitin-protein ligase SIAH1 (SIAH1) of Homo sapiens (Human).